The following is a 293-amino-acid chain: Bifunctional protein FolD (293 aa).

NADP(+)-binding positions include 162-164 (GQS) and isoleucine 227.

It belongs to the tetrahydrofolate dehydrogenase/cyclohydrolase family. In terms of assembly, homodimer.

The catalysed reaction is (6R)-5,10-methylene-5,6,7,8-tetrahydrofolate + NADP(+) = (6R)-5,10-methenyltetrahydrofolate + NADPH. It catalyses the reaction (6R)-5,10-methenyltetrahydrofolate + H2O = (6R)-10-formyltetrahydrofolate + H(+). It participates in one-carbon metabolism; tetrahydrofolate interconversion. Catalyzes the oxidation of 5,10-methylenetetrahydrofolate to 5,10-methenyltetrahydrofolate and then the hydrolysis of 5,10-methenyltetrahydrofolate to 10-formyltetrahydrofolate. The polypeptide is Bifunctional protein FolD (Metamycoplasma arthritidis (strain 158L3-1) (Mycoplasma arthritidis)).